We begin with the raw amino-acid sequence, 590 residues long: Beta-(1--&gt;2)glucan export ATP-binding/permease protein NdvA (590 aa).

The ABC transmembrane type-1 domain maps to 21–301 (VALICGANVA…MSAFANQISE (281 aa)). Helical transmembrane passes span 22 to 42 (ALICGANVALAAIAILEPIMF), 55 to 75 (VFSTLAVWAGLGAFNVIAFVL), 136 to 156 (QHLSTAVALVLLVPTALSMDV), 158 to 178 (MSMVLLGLGVLYVGIGRLVMK), 248 to 268 (LSSTISMMVVLLIGAYLVTHG), and 275 to 295 (VIAFTGFATLLISRLDQMSAF). Residues 335–569 (VRFEDVGFEF…NGRFASLLRA (235 aa)) enclose the ABC transporter domain. 368-375 (GPTGAGKT) serves as a coordination point for ATP.

The protein belongs to the ABC transporter superfamily. Beta-(1--&gt;2)glucan exporter (TC 3.A.1.108.1) family. In terms of assembly, homodimer.

Its subcellular location is the cell inner membrane. It carries out the reaction [(1-&gt;2)-beta-D-glucosyl](n)(in) + ATP + H2O = [(1-&gt;2)-beta-D-glucosyl](n)(out) + ADP + phosphate + H(+). Its function is as follows. Involved in beta-(1--&gt;2)glucan export. Transmembrane domains (TMD) form a pore in the inner membrane and the ATP-binding domain (NBD) is responsible for energy generation. The polypeptide is Beta-(1--&gt;2)glucan export ATP-binding/permease protein NdvA (Mesorhizobium japonicum (strain LMG 29417 / CECT 9101 / MAFF 303099) (Mesorhizobium loti (strain MAFF 303099))).